A 161-amino-acid chain; its full sequence is Large ribosomal subunit protein uL11 (161 aa).

This sequence belongs to the universal ribosomal protein uL11 family. Part of the ribosomal stalk of the 50S ribosomal subunit. Interacts with L10 and the large rRNA to form the base of the stalk. L10 forms an elongated spine to which L12 dimers bind in a sequential fashion forming a multimeric L10(L12)X complex.

In terms of biological role, forms part of the ribosomal stalk which helps the ribosome interact with GTP-bound translation factors. This Methanosarcina mazei (strain ATCC BAA-159 / DSM 3647 / Goe1 / Go1 / JCM 11833 / OCM 88) (Methanosarcina frisia) protein is Large ribosomal subunit protein uL11.